Here is a 486-residue protein sequence, read N- to C-terminus: MAAAGAYSASLPAVPDWLNKGDNAWQLTASTLVGIQSMPGLVVLYGSIVKKKWAVNSAFMALYAYASSLLVWVLVGFRMAFGDQLLPFWGKAGVALTQSYLVGRATLPATAHGAIPRTEPFYPEATLVLFQFEFAAITLVLLAGSVLGRMNIKAWMAFTPLWLLLSYTVGAFSLWGGGFLYRWGVIDYSGGYVIHLSSGIAGFTAAYWVGPRLKSDRERFSPNNILLMIAGGGLLWMGWAGFNGGAPYAANIAASVAVLNTNVCAATSLLMWTCLDVIFFRKPSVIGAVQGMMTGLVCITPGAGLVQTWAAVVMGIFAGSVPWFTMMILHKKSALLMKVDDTLAVFHTHAVAGLLGGILTGLLATPELFSLESTVPGLRGAFYGGGIKQIGKQLGGAAFVIAWNLVVTTAILLGIGLFIPLRMPDEQLMIGDDAAHGEEAYALWGDGEKFDATRHDLSRGGGGGDRDGPAGERLSALGARGVTIQL.

A run of 11 helical transmembrane segments spans residues 29–49, 57–77, 127–147, 161–181, 190–210, 225–245, 252–272, 285–305, 309–329, 343–363, and 399–419; these read ASTL…GSIV, SAFM…LVGF, LVLF…GSVL, LWLL…GFLY, GGYV…YWVG, ILLM…FNGG, IAAS…LLMW, VIGA…GAGL, WAAV…MMIL, LAVF…TGLL, and FVIA…GLFI. Residues 454–470 show a composition bias toward basic and acidic residues; that stretch reads RHDLSRGGGGGDRDGPA. The interval 454–473 is disordered; the sequence is RHDLSRGGGGGDRDGPAGER.

The protein belongs to the ammonia transporter channel (TC 1.A.11.2) family. As to expression, expressed in roots and leaf blades and sheaths.

It localises to the cell membrane. Involved in ammonium transport. This is Ammonium transporter 2 member 1 (AMT2-1) from Oryza sativa subsp. japonica (Rice).